A 130-amino-acid polypeptide reads, in one-letter code: Small ribosomal subunit protein uS8 (130 aa).

It belongs to the universal ribosomal protein uS8 family. In terms of assembly, part of the 30S ribosomal subunit.

In terms of biological role, one of the primary rRNA binding proteins, it binds directly to 16S rRNA central domain where it helps coordinate assembly of the platform of the 30S subunit. This is Small ribosomal subunit protein uS8 from Halobacterium salinarum (strain ATCC 29341 / DSM 671 / R1).